The primary structure comprises 377 residues: 1-deoxy-D-xylulose 5-phosphate reductoisomerase (377 aa).

NADPH is bound by residues threonine 20, glycine 21, isoleucine 23, asparagine 46, and asparagine 115. Lysine 116 lines the 1-deoxy-D-xylulose 5-phosphate pocket. Glutamate 117 is an NADPH binding site. Position 141 (aspartate 141) interacts with Mn(2+). Serine 142, glutamate 143, serine 166, and histidine 189 together coordinate 1-deoxy-D-xylulose 5-phosphate. Glutamate 143 provides a ligand contact to Mn(2+). Glycine 195 provides a ligand contact to NADPH. The 1-deoxy-D-xylulose 5-phosphate site is built by serine 202, asparagine 207, lysine 208, and glutamate 211. Position 211 (glutamate 211) interacts with Mn(2+).

This sequence belongs to the DXR family. Requires Mg(2+) as cofactor. It depends on Mn(2+) as a cofactor.

It carries out the reaction 2-C-methyl-D-erythritol 4-phosphate + NADP(+) = 1-deoxy-D-xylulose 5-phosphate + NADPH + H(+). The protein operates within isoprenoid biosynthesis; isopentenyl diphosphate biosynthesis via DXP pathway; isopentenyl diphosphate from 1-deoxy-D-xylulose 5-phosphate: step 1/6. Functionally, catalyzes the NADPH-dependent rearrangement and reduction of 1-deoxy-D-xylulose-5-phosphate (DXP) to 2-C-methyl-D-erythritol 4-phosphate (MEP). This chain is 1-deoxy-D-xylulose 5-phosphate reductoisomerase, found in Malacoplasma penetrans (strain HF-2) (Mycoplasma penetrans).